We begin with the raw amino-acid sequence, 144 residues long: 3-hydroxyacyl-[acyl-carrier-protein] dehydratase FabZ (144 aa).

His48 is an active-site residue.

Belongs to the thioester dehydratase family. FabZ subfamily.

The protein resides in the cytoplasm. The catalysed reaction is a (3R)-hydroxyacyl-[ACP] = a (2E)-enoyl-[ACP] + H2O. Involved in unsaturated fatty acids biosynthesis. Catalyzes the dehydration of short chain beta-hydroxyacyl-ACPs and long chain saturated and unsaturated beta-hydroxyacyl-ACPs. The polypeptide is 3-hydroxyacyl-[acyl-carrier-protein] dehydratase FabZ (Bacillus pumilus (strain SAFR-032)).